Consider the following 258-residue polypeptide: Imidazole glycerol phosphate synthase subunit HisF (258 aa).

Catalysis depends on residues Asp11 and Asp130.

Belongs to the HisA/HisF family. Heterodimer of HisH and HisF.

It localises to the cytoplasm. The enzyme catalyses 5-[(5-phospho-1-deoxy-D-ribulos-1-ylimino)methylamino]-1-(5-phospho-beta-D-ribosyl)imidazole-4-carboxamide + L-glutamine = D-erythro-1-(imidazol-4-yl)glycerol 3-phosphate + 5-amino-1-(5-phospho-beta-D-ribosyl)imidazole-4-carboxamide + L-glutamate + H(+). It participates in amino-acid biosynthesis; L-histidine biosynthesis; L-histidine from 5-phospho-alpha-D-ribose 1-diphosphate: step 5/9. Functionally, IGPS catalyzes the conversion of PRFAR and glutamine to IGP, AICAR and glutamate. The HisF subunit catalyzes the cyclization activity that produces IGP and AICAR from PRFAR using the ammonia provided by the HisH subunit. The sequence is that of Imidazole glycerol phosphate synthase subunit HisF from Haemophilus influenzae (strain PittEE).